Consider the following 183-residue polypeptide: Shikimate kinase (183 aa).

14–19 (GAGKTT) contacts ATP. Thr-18 provides a ligand contact to Mg(2+). Asp-36, Arg-60, and Gly-82 together coordinate substrate. Arg-120 contributes to the ATP binding site. Position 139 (Arg-139) interacts with substrate. Gln-156 contacts ATP.

It belongs to the shikimate kinase family. In terms of assembly, monomer. It depends on Mg(2+) as a cofactor.

It is found in the cytoplasm. It catalyses the reaction shikimate + ATP = 3-phosphoshikimate + ADP + H(+). It functions in the pathway metabolic intermediate biosynthesis; chorismate biosynthesis; chorismate from D-erythrose 4-phosphate and phosphoenolpyruvate: step 5/7. Functionally, catalyzes the specific phosphorylation of the 3-hydroxyl group of shikimic acid using ATP as a cosubstrate. This Thiobacillus denitrificans (strain ATCC 25259 / T1) protein is Shikimate kinase.